The primary structure comprises 714 residues: MTSMSTAATIKLPYQQQQHHLINSNNSYIQQQQQSPQQHHQQSVNINNCNNNTNNNNNNNNNNNNNNNNNNNNNNNNNNNNNNNNINNNNNNNNKQIPQQSIQTHANSILQLNKTMPHVNPPQQNHIMNQQQQQQQQQHYQQQQHPHQQQHPHQQQHPHQQQHPHQQQHPHQQQIQQQQQQQQQQQQQQQQQQQQQQQQQQPQQQQPQTQSTQERKWDEIKIYSDLIKRFALEASHLTISKENYDDLYNMAFCLFKTVDSMDPDKMPMNMGGNSRKNSFDMYNNNNNNNNNNNINNNNNNNNNNNINNNNNNNNNNNNNNNIVYNPYGNDGPTIPSPHLQHQQQHQQQQHQQQHQQQHQQQQQHQQQQQQQQQQQQQQQQQQQQQQQQQQQQQQQQQQQPQYHNGMPHHMQQHSPESMDHQRIVKLPTGNQNNNYSNDYYSIQAVHSPHLGPSMHLQQQQQNQQNQQIQQQHQQIQHQQQYSQLPIEQQQQMMLQQQQQQQQQQQQQQQQQQQQQQLQQQQHHQQQQIQQQQQSIAKQQMPQQQNTPNNGSPSSSDGKSPVNSNTAITSNNNNNNNNNNNNNNNNNNNSTTPVADPQKNFSGEVFFDDIGQDKPQRRRRRTMYSSRRNLKCHYCEVTETPEWRRGPDGDHTLCNACGLHYAKSQKKLAREKELEKQKELEREKERENTRKHSIDFMLMNDTSSAPTNSQNPTPN.

Disordered stretches follow at residues 28 to 97 (YIQQ…NKQI), 115 to 180 (TMPH…QQQQ), 266 to 362 (MPMN…QQQQ), 394 to 419 (QQQQQQPQYHNGMPHHMQQHSPESMD), 454 to 476 (MHLQQQQQNQQNQQIQQQHQQIQ), and 528 to 621 (IQQQ…RRRT). Composition is skewed to low complexity over residues 30 to 94 (QQQQ…NNNN) and 130 to 147 (QQQQQQQQQHYQQQQHPH). Residues 148–168 (QQQHPHQQQHPHQQQHPHQQQ) are compositionally biased toward basic residues. The segment covering 169 to 180 (HPHQQQIQQQQQ) has biased composition (low complexity). Residues 271-282 (GGNSRKNSFDMY) are compositionally biased toward polar residues. Composition is skewed to low complexity over residues 283–322 (NNNNNNNNNNNINNNNNNNNNNNINNNNNNNNNNNNNNNI) and 340–362 (QHQQQHQQQQHQQQHQQQHQQQQ). 2 stretches are compositionally biased toward low complexity: residues 457-476 (QQQQQNQQNQQIQQQHQQIQ) and 528-549 (IQQQQQSIAKQQMPQQQNTPNN). Over residues 550 to 569 (GSPSSSDGKSPVNSNTAITS) the composition is skewed to polar residues. Over residues 570–588 (NNNNNNNNNNNNNNNNNNN) the composition is skewed to low complexity. A GATA-type zinc finger spans residues 631–656 (CHYCEVTETPEWRRGPDGDHTLCNAC). A coiled-coil region spans residues 661–694 (AKSQKKLAREKELEKQKELEREKERENTRKHSID). The segment covering 667–693 (LAREKELEKQKELEREKERENTRKHSI) has biased composition (basic and acidic residues). The disordered stretch occupies residues 667–714 (LAREKELEKQKELEREKERENTRKHSIDFMLMNDTSSAPTNSQNPTPN). Residues 699 to 714 (NDTSSAPTNSQNPTPN) are compositionally biased toward polar residues.

This is GATA zinc finger domain-containing protein 10 (gtaJ) from Dictyostelium discoideum (Social amoeba).